The following is a 598-amino-acid chain: Elongation factor 4 (598 aa).

Residues 4–181 (KKIRNFAIIA…AIVNLIPPPQ (178 aa)) enclose the tr-type G domain. GTP-binding positions include 16 to 21 (DHGKST) and 128 to 131 (NKID).

The protein belongs to the TRAFAC class translation factor GTPase superfamily. Classic translation factor GTPase family. LepA subfamily.

The protein localises to the cell membrane. The catalysed reaction is GTP + H2O = GDP + phosphate + H(+). Required for accurate and efficient protein synthesis under certain stress conditions. May act as a fidelity factor of the translation reaction, by catalyzing a one-codon backward translocation of tRNAs on improperly translocated ribosomes. Back-translocation proceeds from a post-translocation (POST) complex to a pre-translocation (PRE) complex, thus giving elongation factor G a second chance to translocate the tRNAs correctly. Binds to ribosomes in a GTP-dependent manner. In Mesomycoplasma hyopneumoniae (strain 7448) (Mycoplasma hyopneumoniae), this protein is Elongation factor 4.